The sequence spans 177 residues: Nuclear export protein (177 aa).

Short sequence motifs (nuclear export signal) lie at residues 91–100 (LWLPMKSLSL) and 117–127 (MKHQILTRLKL).

In terms of assembly, binds M1 protein. May interact with human nucleoporins and exportin XPO1/CRM1.

It localises to the virion. The protein localises to the host nucleus. In terms of biological role, mediates the nuclear export of encapsidated genomic RNAs (ribonucleoproteins, RNPs). Acts as an adapter between viral RNPs complexes and the nuclear export machinery of the cell. Possesses no intrinsic RNA-binding activity, but includes a C-terminal M1-binding domain. This domain is believed to allow recognition of RNPs to which the M1 protein is bound. Because the M1 protein is not available in large quantities until the later stages of infection, such an indirect recognition mechanism probably ensures that genomic RNPs are not exported from the nucleus before sufficient quantities of viral mRNA and progeny genomic RNA have been synthesized. Furthermore, the RNPs enters the cytoplasm only when they have associated with the M1 protein that is necessary to guide them to the plasma membrane. May down-regulate viral RNA synthesis when overproduced. The polypeptide is Nuclear export protein (NS) (Homo sapiens (Human)).